We begin with the raw amino-acid sequence, 494 residues long: Glycogen synthase (494 aa).

An ADP-alpha-D-glucose-binding site is contributed by lysine 15.

Belongs to the glycosyltransferase 1 family. Bacterial/plant glycogen synthase subfamily.

It carries out the reaction [(1-&gt;4)-alpha-D-glucosyl](n) + ADP-alpha-D-glucose = [(1-&gt;4)-alpha-D-glucosyl](n+1) + ADP + H(+). Its pathway is glycan biosynthesis; glycogen biosynthesis. Synthesizes alpha-1,4-glucan chains using ADP-glucose. This Albidiferax ferrireducens (strain ATCC BAA-621 / DSM 15236 / T118) (Rhodoferax ferrireducens) protein is Glycogen synthase.